The chain runs to 332 residues: ATP-dependent (S)-NAD(P)H-hydrate dehydratase (332 aa).

The YjeF C-terminal domain maps to 46–326; the sequence is LLERARNIVP…EQIHNVFDDI (281 aa). (6S)-NADPHX-binding positions include Gly-146 and 199–205; that span reads NAIEFCR. Residues 230 to 234 and 251 to 260 each bind ATP; these read KGLND and GSGRRCGGQG. Asp-261 provides a ligand contact to (6S)-NADPHX.

The protein belongs to the NnrD/CARKD family. It depends on Mg(2+) as a cofactor.

It catalyses the reaction (6S)-NADHX + ATP = ADP + phosphate + NADH + H(+). The enzyme catalyses (6S)-NADPHX + ATP = ADP + phosphate + NADPH + H(+). Catalyzes the dehydration of the S-form of NAD(P)HX at the expense of ATP, which is converted to ADP. Together with NAD(P)HX epimerase, which catalyzes the epimerization of the S- and R-forms, the enzyme allows the repair of both epimers of NAD(P)HX, a damaged form of NAD(P)H that is a result of enzymatic or heat-dependent hydration. The chain is ATP-dependent (S)-NAD(P)H-hydrate dehydratase from Aedes aegypti (Yellowfever mosquito).